The following is a 99-amino-acid chain: MAALNGLVLLLLTISAMFISECYSSGESQSIQRKGQCEEVTCHRTLNHLGVAVTSGCPSGCLCVISAPDSAVNVNGTCYQLMGSTSTTTSSTPSSEDQE.

Residues 1-24 (MAALNGLVLLLLTISAMFISECYS) form the signal peptide. Disulfide bonds link cysteine 37–cysteine 61, cysteine 42–cysteine 63, and cysteine 57–cysteine 78.

This sequence belongs to the RaCI family. Expressed in salivary glands.

The protein localises to the secreted. In terms of biological role, complement inhibitor. Prevents complement-mediated C5 activation by binding to C5. Binds C5 at a different binding site than the other tick complement inhibitors OmCI and CirpT1, and the drug eculizumab. The sequence is that of Complement inhibitor RaCI7 from Dermacentor andersoni (Rocky mountain wood tick).